Consider the following 455-residue polypeptide: Argininosuccinate lyase (455 aa).

It belongs to the lyase 1 family. Argininosuccinate lyase subfamily.

It localises to the cytoplasm. The enzyme catalyses 2-(N(omega)-L-arginino)succinate = fumarate + L-arginine. It participates in amino-acid biosynthesis; L-arginine biosynthesis; L-arginine from L-ornithine and carbamoyl phosphate: step 3/3. This Shewanella halifaxensis (strain HAW-EB4) protein is Argininosuccinate lyase.